The chain runs to 462 residues: Argininosuccinate lyase (462 aa).

It belongs to the lyase 1 family. Argininosuccinate lyase subfamily.

Its subcellular location is the cytoplasm. It carries out the reaction 2-(N(omega)-L-arginino)succinate = fumarate + L-arginine. Its pathway is amino-acid biosynthesis; L-arginine biosynthesis; L-arginine from L-ornithine and carbamoyl phosphate: step 3/3. The sequence is that of Argininosuccinate lyase from Bacillus cereus (strain ATCC 14579 / DSM 31 / CCUG 7414 / JCM 2152 / NBRC 15305 / NCIMB 9373 / NCTC 2599 / NRRL B-3711).